The chain runs to 101 residues: NAD(P)H-quinone oxidoreductase subunit 4L, chloroplastic (101 aa).

A run of 3 helical transmembrane segments spans residues 2–22 (MLEH…YGLI), 27–46 (MVRA…MNLI), and 61–81 (IFSI…PAIV).

The protein belongs to the complex I subunit 4L family. NDH is composed of at least 16 different subunits, 5 of which are encoded in the nucleus.

It is found in the plastid. It localises to the chloroplast thylakoid membrane. The enzyme catalyses a plastoquinone + NADH + (n+1) H(+)(in) = a plastoquinol + NAD(+) + n H(+)(out). It catalyses the reaction a plastoquinone + NADPH + (n+1) H(+)(in) = a plastoquinol + NADP(+) + n H(+)(out). Its function is as follows. NDH shuttles electrons from NAD(P)H:plastoquinone, via FMN and iron-sulfur (Fe-S) centers, to quinones in the photosynthetic chain and possibly in a chloroplast respiratory chain. The immediate electron acceptor for the enzyme in this species is believed to be plastoquinone. Couples the redox reaction to proton translocation, and thus conserves the redox energy in a proton gradient. This Drimys granadensis protein is NAD(P)H-quinone oxidoreductase subunit 4L, chloroplastic.